Here is a 101-residue protein sequence, read N- to C-terminus: Small ribosomal subunit protein bS18c (101 aa).

The protein belongs to the bacterial ribosomal protein bS18 family. Part of the 30S ribosomal subunit.

The protein localises to the plastid. The protein resides in the chloroplast. This chain is Small ribosomal subunit protein bS18c, found in Lepidium virginicum (Virginia pepperweed).